Here is a 162-residue protein sequence, read N- to C-terminus: Beta-carotene hydroxylase (162 aa).

The Fatty acid hydroxylase domain maps to 8 to 135; the sequence is VATVLVMELT…GRDHCVSFGF (128 aa).

It belongs to the sterol desaturase family.

It catalyses the reaction all-trans-beta-carotene + 4 reduced [2Fe-2S]-[ferredoxin] + 2 O2 + 4 H(+) = all-trans-zeaxanthin + 4 oxidized [2Fe-2S]-[ferredoxin] + 2 H2O. The protein operates within carotenoid biosynthesis; astaxanthin biosynthesis. In terms of biological role, catalyzes the hydroxylation reaction from beta-carotene to zeaxanthin via beta-cryptoxanthin. The polypeptide is Beta-carotene hydroxylase (crtZ) (Paracoccus sp. (strain PC1) (Alcaligenes sp. (strain PC1))).